Here is a 414-residue protein sequence, read N- to C-terminus: Multifunctional CCA protein (414 aa).

The ATP site is built by Gly-8 and Arg-11. Residues Gly-8 and Arg-11 each contribute to the CTP site. Residues Glu-21 and Asp-23 each coordinate Mg(2+). ATP is bound by residues Arg-91, Arg-137, and Arg-140. CTP contacts are provided by Arg-91, Arg-137, and Arg-140. Residues 228–329 form the HD domain; the sequence is TGIHTLMTLA…LKLFDAIDVW (102 aa).

Belongs to the tRNA nucleotidyltransferase/poly(A) polymerase family. Bacterial CCA-adding enzyme type 1 subfamily. In terms of assembly, monomer. Can also form homodimers and oligomers. The cofactor is Mg(2+). Ni(2+) serves as cofactor.

It carries out the reaction a tRNA precursor + 2 CTP + ATP = a tRNA with a 3' CCA end + 3 diphosphate. The catalysed reaction is a tRNA with a 3' CCA end + 2 CTP + ATP = a tRNA with a 3' CCACCA end + 3 diphosphate. In terms of biological role, catalyzes the addition and repair of the essential 3'-terminal CCA sequence in tRNAs without using a nucleic acid template. Adds these three nucleotides in the order of C, C, and A to the tRNA nucleotide-73, using CTP and ATP as substrates and producing inorganic pyrophosphate. tRNA 3'-terminal CCA addition is required both for tRNA processing and repair. Also involved in tRNA surveillance by mediating tandem CCA addition to generate a CCACCA at the 3' terminus of unstable tRNAs. While stable tRNAs receive only 3'-terminal CCA, unstable tRNAs are marked with CCACCA and rapidly degraded. In Yersinia enterocolitica serotype O:8 / biotype 1B (strain NCTC 13174 / 8081), this protein is Multifunctional CCA protein.